A 201-amino-acid polypeptide reads, in one-letter code: MQRLPEPLKALVEQLSRLPGLGPKSALRLAMTLLKWPASETRRLGRAVHDLRDNLHLCGRCGALTDVDPCGICTDPARSGETLCLVSEWDSLLTLEEGGFYKGQYLILGGLLAPLDNLHADSLELDRLTKRMAEGTVREVVMALGTTVEAENTATYIRNMIVRQYPQVRVTRLAQGIPLGSEVKFMDRETLRQSMQYRQDL.

The C4-type zinc finger occupies 58–73 (CGRCGALTDVDPCGIC). The Toprim domain occupies 81–178 (ETLCLVSEWD…RVTRLAQGIP (98 aa)).

This sequence belongs to the RecR family.

May play a role in DNA repair. It seems to be involved in an RecBC-independent recombinational process of DNA repair. It may act with RecF and RecO. The sequence is that of Recombination protein RecR from Nitratidesulfovibrio vulgaris (strain DSM 19637 / Miyazaki F) (Desulfovibrio vulgaris).